An 892-amino-acid chain; its full sequence is Putative disease resistance protein At4g10780 (892 aa).

The stretch at 24–63 (SLGNYIHKLKDNIVALEKAIEDLTATRDDVLRRVQMEEGK) forms a coiled coil. Positions 137-440 (IVAAPAPKLE…ICEGFIDGNI (304 aa)) constitute an NB-ARC domain. ATP is bound at residue 180-187 (GMGGVGKT). 6 LRR repeats span residues 515–536 (AVRRLSLMNNGIEEISGSPECP), 537–559 (ELTTLFLQENKSLVHISGEFFRH), 562–584 (KLVVLDLSENHQLDGLPEQISEL), 586–608 (ALRYLDLSHTNIEGLPACLQDLK), 609–631 (TLIHLNLECMRRLGSIAGISKLS), and 632–654 (SLRTLGLRNSNIMLDVMSVKELH).

It belongs to the disease resistance NB-LRR family.

Functionally, potential disease resistance protein. The sequence is that of Putative disease resistance protein At4g10780 from Arabidopsis thaliana (Mouse-ear cress).